Reading from the N-terminus, the 458-residue chain is MSSVIRKWALTALMAVSSTALFAQNPAASGQAANQGDNRRILRVDITGGISQPMPIAVPVMPTPSSVETLAGTTAVLGRQVASVISNDLKSSGLFTPSQQASLHNVSFPEVTAPQYSYWLSSGAQALVQGFVQANGDGTLTVGCYLYDVFASQEMLHKGFVVKPADWRRAAHKCADAVYTRLTGEGPYFDSRIVYISETGPKNHRLKRLAIMDQDGANHRFLTNGQSMVLTPRFAPNQQTVTYLSYVGNSPRIYVYTLGSGHVRLVVNKPNTTFAPRFSPDGKTIVFSMSVAGNTDIYKVPVSGGQATRLTTSPGIDTAPSFSPDGSKIVFESDRSGSQQIYIMNADGSNQNRISFGSGRYATPVWSPRGDLIAFTKLGGGFHVGVMKTDGSGEQILTNGWQDEGPSWSPNGRVIAFFRTARNSGHTELWSVDLTGVNERHIPTPLDGSDPSWGPLLP.

Positions 1–23 are cleaved as a signal peptide; it reads MSSVIRKWALTALMAVSSTALFA.

The protein belongs to the TolB family. The Tol-Pal system is composed of five core proteins: the inner membrane proteins TolA, TolQ and TolR, the periplasmic protein TolB and the outer membrane protein Pal. They form a network linking the inner and outer membranes and the peptidoglycan layer.

It is found in the periplasm. Part of the Tol-Pal system, which plays a role in outer membrane invagination during cell division and is important for maintaining outer membrane integrity. This Zymomonas mobilis subsp. mobilis (strain ATCC 31821 / ZM4 / CP4) protein is Tol-Pal system protein TolB.